A 299-amino-acid polypeptide reads, in one-letter code: Ribosomal RNA small subunit methyltransferase A (299 aa).

S-adenosyl-L-methionine is bound by residues Asn-44, Val-46, Gly-71, Glu-92, Asp-122, and Asn-141.

It belongs to the class I-like SAM-binding methyltransferase superfamily. rRNA adenine N(6)-methyltransferase family. RsmA subfamily.

The protein resides in the cytoplasm. It catalyses the reaction adenosine(1518)/adenosine(1519) in 16S rRNA + 4 S-adenosyl-L-methionine = N(6)-dimethyladenosine(1518)/N(6)-dimethyladenosine(1519) in 16S rRNA + 4 S-adenosyl-L-homocysteine + 4 H(+). Functionally, specifically dimethylates two adjacent adenosines (A1518 and A1519) in the loop of a conserved hairpin near the 3'-end of 16S rRNA in the 30S particle. May play a critical role in biogenesis of 30S subunits. In Rhodococcus erythropolis (strain PR4 / NBRC 100887), this protein is Ribosomal RNA small subunit methyltransferase A.